The following is a 100-amino-acid chain: uncharacterized protein (100 aa).

To M.jannaschii MJ1155.1.

This is an uncharacterized protein from Archaeoglobus fulgidus (strain ATCC 49558 / DSM 4304 / JCM 9628 / NBRC 100126 / VC-16).